Consider the following 240-residue polypeptide: Type II restriction enzyme DdeI (240 aa).

It carries out the reaction Endonucleolytic cleavage of DNA to give specific double-stranded fragments with terminal 5'-phosphates.. A P subtype restriction enzyme that recognizes the double-stranded sequence 5'-CTNAG-3' and cleaves after C-1. In Desulfomicrobium norvegicum (strain DSM 1741 / NCIMB 8310) (Desulfovibrio baculatus (strain Norway 4)), this protein is Type II restriction enzyme DdeI (ddeIR).